The sequence spans 1034 residues: Tubulin glycylase 3D (1034 aa).

Composition is skewed to polar residues over residues 1-13 (MINS…QTLN) and 131-146 (QVNS…QNDF). 3 disordered regions span residues 1-21 (MINS…SQMD), 131-166 (QVNS…STDY), and 189-208 (LNQQ…DNSQ). The segment covering 151 to 161 (RKPKNPTTKKR) has biased composition (basic residues). The segment covering 189-199 (LNQQNQQQQDL) has biased composition (low complexity). The 360-residue stretch at 571–930 (DINNVIDDEK…YGMAQKSGIK (360 aa)) folds into the TTL domain. ATP-binding positions include 741–744 (QKYI), K754, and D756. A disordered region spans residues 1002–1034 (HDQKQFSSQQANNIETYSRPQTAKSQTQSSKKL).

It is found in the cytoplasm. Its function is as follows. Probable glycylase which modifies tubulin, generating side chains of glycine on the gamma-carboxyl groups of specific glutamate residues within the C-terminal tail of tubulin. The chain is Tubulin glycylase 3D (TTLL3D) from Tetrahymena thermophila (strain SB210).